The primary structure comprises 189 residues: Flavin prenyltransferase UbiX (189 aa).

Residues 10-12 (GAS), serine 36, 91-94 (STNT), and arginine 126 each bind FMN. Tyrosine 156 and lysine 172 together coordinate dimethylallyl phosphate.

Belongs to the UbiX/PAD1 family.

The enzyme catalyses dimethylallyl phosphate + FMNH2 = prenylated FMNH2 + phosphate. In terms of biological role, flavin prenyltransferase that catalyzes the synthesis of the prenylated FMN cofactor (prenyl-FMN) for 4-hydroxy-3-polyprenylbenzoic acid decarboxylase UbiD. The prenyltransferase is metal-independent and links a dimethylallyl moiety from dimethylallyl monophosphate (DMAP) to the flavin N5 and C6 atoms of FMN. The protein is Flavin prenyltransferase UbiX of Aquifex aeolicus (strain VF5).